The chain runs to 345 residues: Eukaryotic translation initiation factor 3 subunit F (345 aa).

In terms of domain architecture, MPN spans 30 to 166; sequence VVIQPQAIFS…TRAYISAPVG (137 aa). A disordered region spans residues 310-345; the sequence is EGASAEAGAQRGQRGGKGGRGGQQRTQERASEEVRA. Over residues 312–321 the composition is skewed to low complexity; the sequence is ASAEAGAQRG. Over residues 322-331 the composition is skewed to gly residues; sequence QRGGKGGRGG. Residues 335–345 are compositionally biased toward basic and acidic residues; it reads TQERASEEVRA.

The protein belongs to the eIF-3 subunit F family. As to quaternary structure, component of the eukaryotic translation initiation factor 3 (eIF-3) complex.

It is found in the cytoplasm. Its function is as follows. Component of the eukaryotic translation initiation factor 3 (eIF-3) complex, which is involved in protein synthesis of a specialized repertoire of mRNAs and, together with other initiation factors, stimulates binding of mRNA and methionyl-tRNAi to the 40S ribosome. The eIF-3 complex specifically targets and initiates translation of a subset of mRNAs involved in cell proliferation. This is Eukaryotic translation initiation factor 3 subunit F from Aspergillus fumigatus (strain CBS 144.89 / FGSC A1163 / CEA10) (Neosartorya fumigata).